We begin with the raw amino-acid sequence, 251 residues long: Cell division protein ZapD (251 aa).

It belongs to the ZapD family. As to quaternary structure, interacts with FtsZ.

Its subcellular location is the cytoplasm. Cell division factor that enhances FtsZ-ring assembly. Directly interacts with FtsZ and promotes bundling of FtsZ protofilaments, with a reduction in FtsZ GTPase activity. The protein is Cell division protein ZapD of Azoarcus sp. (strain BH72).